The chain runs to 198 residues: V-type ATP synthase subunit E (198 aa).

This sequence belongs to the V-ATPase E subunit family.

Its function is as follows. Produces ATP from ADP in the presence of a proton gradient across the membrane. This Clostridium perfringens (strain SM101 / Type A) protein is V-type ATP synthase subunit E.